The primary structure comprises 201 residues: MEITNAEFVISNTDVKKCPAGTFPEYAFIGRSNVGKSSLINMLTGRKGLAMTSATPGKTMLINHFLINNSWYLVDLPGYGYARRGQKGQKQIRTIIEDYILEREQMTNLFVLIDSRLEPQKIDLEFMEWLGENGIPFAIIFTKADKLKGGRLKINISAYLRELRKQWEELPPYFITSSEERLGRTEVLNYIESINKELNSK.

In terms of domain architecture, EngB-type G spans 22–197; the sequence is TFPEYAFIGR…LNYIESINKE (176 aa). GTP is bound by residues 30–37, 57–61, 75–78, 142–145, and 175–178; these read GRSNVGKS, GKTML, DLPG, TKAD, and ITSS. Residues S37 and T59 each contribute to the Mg(2+) site.

This sequence belongs to the TRAFAC class TrmE-Era-EngA-EngB-Septin-like GTPase superfamily. EngB GTPase family. The cofactor is Mg(2+).

Functionally, necessary for normal cell division and for the maintenance of normal septation. In Bacteroides fragilis (strain ATCC 25285 / DSM 2151 / CCUG 4856 / JCM 11019 / LMG 10263 / NCTC 9343 / Onslow / VPI 2553 / EN-2), this protein is Probable GTP-binding protein EngB.